The primary structure comprises 466 residues: Muscarinic acetylcholine receptor M2 (466 aa).

Residues 1-22 (MNNSTNSSNSGLALTSPYKTFE) are Extracellular-facing. N-linked (GlcNAc...) asparagine glycosylation is found at Asn-2, Asn-3, and Asn-6. A helical transmembrane segment spans residues 23–45 (VVFIVLVAGSLSLVTIIGNILVM). Over 46 to 59 (VSIKVNRHLQTVNN) the chain is Cytoplasmic. A helical transmembrane segment spans residues 60–80 (YFLFSLACADLIIGVFSMNLY). Over 81 to 97 (TLYTVIGYWPLGPVVCD) the chain is Extracellular. Cysteines 96 and 176 form a disulfide. Residues 98–119 (LWLALDYVVSNASVMNLLIISF) form a helical membrane-spanning segment. Residues 120 to 122 (DRY) carry the Important for signaling motif. At 120–139 (DRYFCVTKPLTYPVKRTTKM) the chain is on the cytoplasmic side. A helical membrane pass occupies residues 140–162 (AGMMIAAAWVLSFILWAPAILFW). Topologically, residues 163 to 184 (QFIVGVRTVEDGECYIQFFSNA) are extracellular. The chain crosses the membrane as a helical span at residues 185–209 (AVTFGTAIAAFYLPVIIMTVLYWHI). At 210–387 (SRASKSRIKK…PPSREKKVTR (178 aa)) the chain is on the cytoplasmic side. Residues 218–320 (KKDKKEPVAN…SLGHSKDENS (103 aa)) are disordered. Ser-232 carries the post-translational modification Phosphoserine. A compositionally biased stretch (basic and acidic residues) spans 254 to 270 (ALEHNKIQNGKAPRDAV). Composition is skewed to polar residues over residues 284–293 (NDSTSVSAVA) and 304–313 (DENTVSTSLG). A helical transmembrane segment spans residues 388–410 (TILAILLAFIITWAPYNVMVLIN). The Extracellular portion of the chain corresponds to 411-418 (TFCAPCIP). Residues Cys-413 and Cys-416 are joined by a disulfide bond. Residues 419–442 (NTVWTIGYWLCYINSTINPACYAL) form a helical membrane-spanning segment. The Important for signaling signature appears at 436–440 (NPACY). Residues 443–466 (CNATFKKTFKHLLMCHYKNIGATR) lie on the Cytoplasmic side of the membrane. 3 positions are modified to phosphothreonine: Thr-446, Thr-450, and Thr-465.

It belongs to the G-protein coupled receptor 1 family. Muscarinic acetylcholine receptor subfamily. CHRM2 sub-subfamily. In terms of assembly, interacts with ARRB1 and ARRB2. Interacts with RACK1; the interaction regulates CHRM2 internalization. In terms of processing, phosphorylated in response to agonist treatment.

The protein localises to the cell membrane. It localises to the postsynaptic cell membrane. Functionally, the muscarinic acetylcholine receptor mediates various cellular responses, including inhibition of adenylate cyclase, breakdown of phosphoinositides and modulation of potassium channels through the action of G proteins. Primary transducing effect is adenylate cyclase inhibition. This chain is Muscarinic acetylcholine receptor M2 (CHRM2), found in Sus scrofa (Pig).